Here is a 152-residue protein sequence, read N- to C-terminus: Regulatory protein RecX (152 aa).

This sequence belongs to the RecX family.

Its subcellular location is the cytoplasm. Its function is as follows. Modulates RecA activity. The sequence is that of Regulatory protein RecX from Chromobacterium violaceum (strain ATCC 12472 / DSM 30191 / JCM 1249 / CCUG 213 / NBRC 12614 / NCIMB 9131 / NCTC 9757 / MK).